A 590-amino-acid polypeptide reads, in one-letter code: Protein NRT1/ PTR FAMILY 6.4 (590 aa).

The interval 1-24 is disordered; the sequence is MVHVSSSHGAKDGSEEAYDYRGNP. 12 consecutive transmembrane segments (helical) span residues 48–68, 73–93, 104–124, 147–167, 197–217, 222–242, 332–352, 371–391, 419–439, 453–473, 492–512, and 533–553; these read ICVM…LHIS, ATIV…GGFL, VAIS…ATTI, GHQL…GGGI, FYFS…YVQD, GWGY…LLCG, VKLV…WTIY, GSFT…ILLF, IGVG…IENA, AFWL…AYVG, GLFL…VSLV, and FYWL…VFAM.

It belongs to the major facilitator superfamily. Proton-dependent oligopeptide transporter (POT/PTR) (TC 2.A.17) family. As to expression, expressed in leaves, flowers and siliques. Detected in leaves.

Its subcellular location is the membrane. Functionally, low-affinity nitrate transporter. This Arabidopsis thaliana (Mouse-ear cress) protein is Protein NRT1/ PTR FAMILY 6.4 (NPF6.4).